A 600-amino-acid chain; its full sequence is MSGTPIRGTPGGTPLSPTRISRLQEKEELRQLNDRLAVYIDRVRALELENDRLLVKISEKEEVTTREVSGIKNLYESELADARRVLDETAKERARLQIEIGKLRAELEEFNKSYKKKDADLSVAQGRIKDLEVLFHRSEAELNTVLNEKRSLEAEVADLRAQLAKAEDGHAVAKKQLEKETLMRVDLENRCQSLQEDLDFRKNVFEEEIRETRKRHEHRLVEVDTSRQQEYENKMAQALEDLRNQHDEQVKLYKMELEQTYQAKLENAILASDQNDKAAGAAREELKEARMRIESLSHQLSGLQKQASATEDRIRELKETMAGERDKFRKMLDAKEREMTEMRDQMQLQLTEYQELLDVKLALDMEISAYRKLLEGEEERLKLSPSPSSRVTVSRATSSSSSSSTSLVRSSRGKRRRIEAEELSGSGTSGIGTGSISGSSSSSSFQMSQQASATGSISIEEIDLEGKYVQLKNNSEKDQSLGNWRLKRQIGDGEEIAYKFTPKYVLRAGQTVTIWGADAGVSHSPPSVLVWKNQGSWGTGGNIRTYLVNSDGEEVAVRTVTKSVVVRENEEEEDEADFGEEDLFNQQGDPRTTSRGCLVM.

The tract at residues 2–27 (SGTPIRGTPGGTPLSPTRISRLQEKE) is head. Position 16 is a phosphoserine; by CDK1 (Ser-16). One can recognise an IF rod domain in the interval 25–381 (EKEELRQLND…KLLEGEEERL (357 aa)). The segment at 28–64 (ELRQLNDRLAVYIDRVRALELENDRLLVKISEKEEVT) is coil 1A. A coil 1B region spans residues 75 to 212 (YESELADARR…NVFEEEIRET (138 aa)). Residues 237-379 (QALEDLRNQH…YRKLLEGEEE (143 aa)) form a coil 2 region. Disordered stretches follow at residues 377–449 (EEER…QMSQ) and 568–600 (ENEE…CLVM). A tail region spans residues 380-600 (RLKLSPSPSS…RTTSRGCLVM (221 aa)). Residues 383–410 (LSPSPSSRVTVSRATSSSSSSSTSLVRS) are compositionally biased toward low complexity. Residue Ser-386 is modified to Phosphoserine. Positions 414-419 (KRRRIE) match the Nuclear localization signal motif. Residues 445–562 (FQMSQQASAT…EEVAVRTVTK (118 aa)) enclose the LTD domain. The span at 569-583 (NEEEEDEADFGEEDL) shows a compositional bias: acidic residues. Residues 584 to 600 (FNQQGDPRTTSRGCLVM) are compositionally biased toward polar residues. A Cysteine methyl ester modification is found at Cys-597. A lipid anchor (S-farnesyl cysteine) is attached at Cys-597. Residues 598–600 (LVM) constitute a propeptide, removed in mature form.

This sequence belongs to the intermediate filament family. As to quaternary structure, homodimer. Lamin dimers then assemble into dimeric head-to-tail polymers. Ultimately, two head-to-tail polymers assemble laterally into a protofilament with a uniformly shaped rod of 3.5 nm in diameter. Post-translationally, phosphorylation plays a key role in lamin organization, subcellular localization and nuclear envelope disintegration. Phosphorylation by CDK1 at Ser-16 at the onset of mitosis drives lamin disassembly and nuclear envelope breakdown.

It localises to the nucleus lamina. The protein resides in the nucleus envelope. The protein localises to the nucleus. It is found in the nucleoplasm. Its subcellular location is the nucleus matrix. In terms of biological role, lamins are intermediate filament proteins that assemble into a filamentous meshwork, and which constitute the major components of the nuclear lamina, a fibrous layer on the nucleoplasmic side of the inner nuclear membrane. Lamins provide a framework for the nuclear envelope, bridging the nuclear envelope and chromatin. Plays an important role in nuclear assembly, chromatin organization, nuclear membrane and telomere dynamics. This chain is Lamin-B2 (LMNB2), found in Gallus gallus (Chicken).